Consider the following 72-residue polypeptide: Translation initiation factor IF-1 (72 aa).

One can recognise an S1-like domain in the interval 1–72; that stretch reads MSKDDSIEFE…TKGRITYRMK (72 aa).

This sequence belongs to the IF-1 family. As to quaternary structure, component of the 30S ribosomal translation pre-initiation complex which assembles on the 30S ribosome in the order IF-2 and IF-3, IF-1 and N-formylmethionyl-tRNA(fMet); mRNA recruitment can occur at any time during PIC assembly.

The protein resides in the cytoplasm. One of the essential components for the initiation of protein synthesis. Stabilizes the binding of IF-2 and IF-3 on the 30S subunit to which N-formylmethionyl-tRNA(fMet) subsequently binds. Helps modulate mRNA selection, yielding the 30S pre-initiation complex (PIC). Upon addition of the 50S ribosomal subunit IF-1, IF-2 and IF-3 are released leaving the mature 70S translation initiation complex. In Xanthomonas campestris pv. campestris (strain 8004), this protein is Translation initiation factor IF-1.